The chain runs to 594 residues: Alanine--tRNA ligase (594 aa).

H456, H460, C558, and H562 together coordinate Zn(2+).

Belongs to the class-II aminoacyl-tRNA synthetase family. It depends on Zn(2+) as a cofactor.

It localises to the cytoplasm. The catalysed reaction is tRNA(Ala) + L-alanine + ATP = L-alanyl-tRNA(Ala) + AMP + diphosphate. Catalyzes the attachment of alanine to tRNA(Ala) in a two-step reaction: alanine is first activated by ATP to form Ala-AMP and then transferred to the acceptor end of tRNA(Ala). Also edits incorrectly charged Ser-tRNA(Ala) and Gly-tRNA(Ala) via its editing domain. This is Alanine--tRNA ligase (alaS) from Borrelia garinii subsp. bavariensis (strain ATCC BAA-2496 / DSM 23469 / PBi) (Borreliella bavariensis).